Consider the following 378-residue polypeptide: RNA polymerase sigma factor SigA (378 aa).

The disordered stretch occupies residues 1-29 (MKNKTEVKNGGEKKNSKKVSKEESAKEKN). The segment at 145-215 (LAEANLRLVV…TRAIADQART (71 aa)) is sigma-70 factor domain-2. Residues 169 to 172 (DLIQ) carry the Interaction with polymerase core subunit RpoC motif. The interval 224–300 (ETINKLIRVS…DDEAPAPADA (77 aa)) is sigma-70 factor domain-3. Residues 313–366 (ILNTLTPREEKVLRLRFGLDDGRARTLEEVGKEFNVTRERIRQIEAKALRKLRH) form a sigma-70 factor domain-4 region. The H-T-H motif DNA-binding region spans 339-358 (LEEVGKEFNVTRERIRQIEA).

This sequence belongs to the sigma-70 factor family. RpoD/SigA subfamily. As to quaternary structure, interacts transiently with the RNA polymerase catalytic core.

Its subcellular location is the cytoplasm. In terms of biological role, sigma factors are initiation factors that promote the attachment of RNA polymerase to specific initiation sites and are then released. This sigma factor is the primary sigma factor during exponential growth. In Clostridium acetobutylicum (strain ATCC 824 / DSM 792 / JCM 1419 / IAM 19013 / LMG 5710 / NBRC 13948 / NRRL B-527 / VKM B-1787 / 2291 / W), this protein is RNA polymerase sigma factor SigA.